A 284-amino-acid chain; its full sequence is Homeobox protein SMOX-5 (284 aa).

The segment at residues 37 to 96 is a DNA-binding region (homeobox); it reads RRKTRTTFSNCQLNELENNFNRQRYLTPTDRDRIAKHLGLTNTQVITWFQNRRAKLKREA. The segment at 117 to 172 is disordered; that stretch reads LSLSDHDHEETQIDDENEQGDNNNDDDGDDNDVEEDDGEEQEKNHTKYLTQPPSIS. The segment covering 128 to 156 has biased composition (acidic residues); sequence QIDDENEQGDNNNDDDGDDNDVEEDDGEE.

The protein resides in the nucleus. The chain is Homeobox protein SMOX-5 (SMOX-5) from Schistosoma mansoni (Blood fluke).